A 604-amino-acid chain; its full sequence is Glucoamylase 1 (604 aa).

Residues 1 to 25 (MQLFNLPLKVSFFLVLSYFSLLVSA) form the signal peptide. The adsorption to raw starch stretch occupies residues 26-115 (ASIPSSASVQ…EFYIKYEVSG (90 aa)). The CBM21 domain occupies 26–130 (ASIPSSASVQ…NNNSANYQVS (105 aa)). The interval 116-604 (KTYYDNNNSA…SYAKAGAPAA (489 aa)) is starch degradation. Asparagine 122 carries N-linked (GlcNAc...) asparagine glycosylation. The disordered stretch occupies residues 127-164 (YQVSTSKPTTTTATATTTTAPSTSTTTPPSRSEPATFP). Residues 130–162 (STSKPTTTTATATTTTAPSTSTTTPPSRSEPAT) are compositionally biased toward low complexity. Asparagine 167, asparagine 230, and asparagine 236 each carry an N-linked (GlcNAc...) asparagine glycan. A substrate-binding site is contributed by tryptophan 279. Aspartate 336 serves as the catalytic Proton acceptor. Glutamate 339 acts as the Proton donor in catalysis. A glycan (N-linked (GlcNAc...) asparagine) is linked at asparagine 564.

This sequence belongs to the glycosyl hydrolase 15 family.

It carries out the reaction Hydrolysis of terminal (1-&gt;4)-linked alpha-D-glucose residues successively from non-reducing ends of the chains with release of beta-D-glucose.. The chain is Glucoamylase 1 from Rhizopus oryzae (Mucormycosis agent).